Here is a 554-residue protein sequence, read N- to C-terminus: ATP synthase subunit alpha (554 aa).

173 to 180 (GDRQTGKT) serves as a coordination point for ATP. Residues 531-554 (SHLAAEKVRKHVPPSKPTTQRTAG) are disordered.

This sequence belongs to the ATPase alpha/beta chains family. In terms of assembly, F-type ATPases have 2 components, CF(1) - the catalytic core - and CF(0) - the membrane proton channel. CF(1) has five subunits: alpha(3), beta(3), gamma(1), delta(1), epsilon(1). CF(0) has three main subunits: a(1), b(2) and c(9-12). The alpha and beta chains form an alternating ring which encloses part of the gamma chain. CF(1) is attached to CF(0) by a central stalk formed by the gamma and epsilon chains, while a peripheral stalk is formed by the delta and b chains.

The protein resides in the cell membrane. It catalyses the reaction ATP + H2O + 4 H(+)(in) = ADP + phosphate + 5 H(+)(out). Produces ATP from ADP in the presence of a proton gradient across the membrane. The alpha chain is a regulatory subunit. This Acidothermus cellulolyticus (strain ATCC 43068 / DSM 8971 / 11B) protein is ATP synthase subunit alpha.